Here is a 540-residue protein sequence, read N- to C-terminus: CTP synthase (540 aa).

The tract at residues 1–270 (MNNLTSTKFI…DTQILKHFNI (270 aa)) is amidoligase domain. S18 provides a ligand contact to CTP. S18 provides a ligand contact to UTP. ATP contacts are provided by residues 19 to 24 (SLGKGL) and D76. Positions 76 and 144 each coordinate Mg(2+). CTP is bound by residues 151-153 (DIE), 191-196 (KTKPTQ), and K227. Residues 191-196 (KTKPTQ) and K227 contribute to the UTP site. In terms of domain architecture, Glutamine amidotransferase type-1 spans 295–537 (TIAIIGKYIK…VQASLNYQET (243 aa)). G356 contributes to the L-glutamine binding site. The Nucleophile; for glutamine hydrolysis role is filled by C383. Residues 384-387 (MGMQ), E407, and R462 contribute to the L-glutamine site. Active-site residues include H510 and E512.

This sequence belongs to the CTP synthase family. As to quaternary structure, homotetramer.

The catalysed reaction is UTP + L-glutamine + ATP + H2O = CTP + L-glutamate + ADP + phosphate + 2 H(+). It catalyses the reaction L-glutamine + H2O = L-glutamate + NH4(+). It carries out the reaction UTP + NH4(+) + ATP = CTP + ADP + phosphate + 2 H(+). It participates in pyrimidine metabolism; CTP biosynthesis via de novo pathway; CTP from UDP: step 2/2. Its activity is regulated as follows. Allosterically activated by GTP, when glutamine is the substrate; GTP has no effect on the reaction when ammonia is the substrate. The allosteric effector GTP functions by stabilizing the protein conformation that binds the tetrahedral intermediate(s) formed during glutamine hydrolysis. Inhibited by the product CTP, via allosteric rather than competitive inhibition. Functionally, catalyzes the ATP-dependent amination of UTP to CTP with either L-glutamine or ammonia as the source of nitrogen. Regulates intracellular CTP levels through interactions with the four ribonucleotide triphosphates. In Ehrlichia ruminantium (strain Welgevonden), this protein is CTP synthase.